We begin with the raw amino-acid sequence, 238 residues long: Ribonuclease-like storage protein (238 aa).

The N-terminal stretch at 1–23 (MRAIYIISVIIVSLSIFSWGGNA) is a signal peptide. Q37 serves as a coordination point for RNA. Residues C43 and C49 are joined by a disulfide bond. RNA is bound by residues H61, F109, 112-113 (HE), and 116-117 (KH). The active-site Proton donor is H61. Disulfide bonds link C76–C120 and C196–C207. E113 is an active-site residue. The active-site Proton acceptor is H117.

Belongs to the RNase T2 family. Homodimer. Root.

In terms of biological role, may act as a storage protein providing a nitrogen source. Seems to have no RNase activity although it has conserved the active site residues. The polypeptide is Ribonuclease-like storage protein (Panax ginseng (Korean ginseng)).